Reading from the N-terminus, the 89-residue chain is Teretoxin Tan22.12 (89 aa).

An N-terminal signal peptide occupies residues 1–22 (MKVLFTLAMIVVTLCLGQRMRR).

This sequence belongs to the teretoxin C (TC) superfamily. In terms of processing, contains 4 disulfide bonds. Expressed by the venom duct.

The protein resides in the secreted. In Terebra anilis (Auger snail), this protein is Teretoxin Tan22.12.